The following is a 900-amino-acid chain: Translation initiation factor IF-2 (900 aa).

Residues 80–95 (LEEQSRKTVEKEDQLR) show a composition bias toward basic and acidic residues. Disordered stretches follow at residues 80-106 (LEEQ…VPGR), 149-169 (AVEA…DSPV), and 221-268 (DEFD…VDEK). The segment covering 253 to 262 (GKKKGKKKKK) has biased composition (basic residues). Residues 397 to 567 (TRPPVVTIMG…LTEAEVRELK (171 aa)) form the tr-type G domain. The segment at 406 to 413 (GHVDHGKT) is G1. 406 to 413 (GHVDHGKT) serves as a coordination point for GTP. Residues 431-435 (GITQH) are G2. Residues 453-456 (DTPG) form a G3 region. GTP is bound by residues 453–457 (DTPGH) and 507–510 (NKID). A G4 region spans residues 507–510 (NKID). The G5 stretch occupies residues 543 to 545 (SAK).

It belongs to the TRAFAC class translation factor GTPase superfamily. Classic translation factor GTPase family. IF-2 subfamily.

The protein resides in the cytoplasm. One of the essential components for the initiation of protein synthesis. Protects formylmethionyl-tRNA from spontaneous hydrolysis and promotes its binding to the 30S ribosomal subunits. Also involved in the hydrolysis of GTP during the formation of the 70S ribosomal complex. This is Translation initiation factor IF-2 from Chlorobium phaeovibrioides (strain DSM 265 / 1930) (Prosthecochloris vibrioformis (strain DSM 265)).